The sequence spans 234 residues: LexA repressor (234 aa).

Positions 26–46 form a DNA-binding region, H-T-H motif; sequence FDEMKTALELTSKSGIHRLIT. Catalysis depends on for autocatalytic cleavage activity residues Ser155 and Lys193.

Belongs to the peptidase S24 family. Homodimer.

The enzyme catalyses Hydrolysis of Ala-|-Gly bond in repressor LexA.. In terms of biological role, represses a number of genes involved in the response to DNA damage (SOS response), including recA and lexA. In the presence of single-stranded DNA, RecA interacts with LexA causing an autocatalytic cleavage which disrupts the DNA-binding part of LexA, leading to derepression of the SOS regulon and eventually DNA repair. The polypeptide is LexA repressor (Bartonella henselae (strain ATCC 49882 / DSM 28221 / CCUG 30454 / Houston 1) (Rochalimaea henselae)).